Reading from the N-terminus, the 226-residue chain is MAAPVTRQVSGCAGRVPSPAGSVTERGQPLAAAVAELPVLDASGRRVTFGALFRERRAVVVFVRHFLCYVCKEYVEDLAKIPKSVLREADVTLIVIGQSSYHHIEPFCKLTGYSHEIYVDPEREIYKRLGMKRGEEISSSGQSPHIKSNLLSGSLQSLWRAVTGPLFDFQGDPAQQGGTLILGPGNNIHFVHRDRNRLDHKPINSVLQLVGVQPVNFMSRPTVIHV.

The segment at 1-24 (MAAPVTRQVSGCAGRVPSPAGSVT) is disordered.

The protein belongs to the peroxiredoxin-like PRXL2 family. PRXL2C subfamily.

May positively regulate ERK1/2 signaling and AKT1 activation leading to HIF1A up-regulation with an increased expression of glycolysis genes and enhanced glycolysis. This Mus musculus (Mouse) protein is Peroxiredoxin-like 2C (Prxl2c).